Reading from the N-terminus, the 227-residue chain is Flagellar L-ring protein (227 aa).

Positions 1–15 (MRTWAVLPILLMLVG) are cleaved as a signal peptide. A lipid anchor (N-palmitoyl cysteine) is attached at Cys-16. Cys-16 carries S-diacylglycerol cysteine lipidation.

The protein belongs to the FlgH family. In terms of assembly, the basal body constitutes a major portion of the flagellar organelle and consists of four rings (L,P,S, and M) mounted on a central rod.

It is found in the cell outer membrane. The protein resides in the bacterial flagellum basal body. In terms of biological role, assembles around the rod to form the L-ring and probably protects the motor/basal body from shearing forces during rotation. The chain is Flagellar L-ring protein from Syntrophotalea carbinolica (strain DSM 2380 / NBRC 103641 / GraBd1) (Pelobacter carbinolicus).